A 536-amino-acid chain; its full sequence is 1,4-beta-D-glucan cellobiohydrolase B (536 aa).

An N-terminal signal peptide occupies residues 1-21 (MSSFQIYRAALLLSILATANA). Residues 22–458 (QQVGTYTTET…SNIKFGPIGS (437 aa)) are catalytic. The active-site Nucleophile is the E233. E238 (proton donor) is an active-site residue. N351 and N414 each carry an N-linked (GlcNAc...) asparagine glycan. The tract at residues 459–500 (TYSSGSSSGSGSSSSSSSTTTKATSTTLKTTSTTSSGSSSTS) is ser/Thr-rich linker. The segment at 464 to 499 (SSSGSGSSSSSSSTTTKATSTTLKTTSTTSSGSSST) is disordered. Residues 500–536 (SAAQAYGQCGGQGWTGPTTCVSGYTCTYENAYYSQCL) enclose the CBM1 domain. 2 disulfide bridges follow: C508/C525 and C519/C535.

The protein belongs to the glycosyl hydrolase 7 (cellulase C) family.

Its subcellular location is the secreted. The enzyme catalyses Hydrolysis of (1-&gt;4)-beta-D-glucosidic linkages in cellulose and cellotetraose, releasing cellobiose from the non-reducing ends of the chains.. The biological conversion of cellulose to glucose generally requires three types of hydrolytic enzymes: (1) Endoglucanases which cut internal beta-1,4-glucosidic bonds; (2) Exocellobiohydrolases that cut the disaccharide cellobiose from the non-reducing end of the cellulose polymer chain; (3) Beta-1,4-glucosidases which hydrolyze the cellobiose and other short cello-oligosaccharides to glucose. This chain is 1,4-beta-D-glucan cellobiohydrolase B (cbhB), found in Aspergillus niger.